A 365-amino-acid chain; its full sequence is Peptide chain release factor 2 (365 aa).

The residue at position 252 (glutamine 252) is an N5-methylglutamine.

This sequence belongs to the prokaryotic/mitochondrial release factor family. Post-translationally, methylated by PrmC. Methylation increases the termination efficiency of RF2.

The protein localises to the cytoplasm. Its function is as follows. Peptide chain release factor 2 directs the termination of translation in response to the peptide chain termination codons UGA and UAA. This Pasteurella multocida (strain Pm70) protein is Peptide chain release factor 2.